The chain runs to 333 residues: Anthranilate phosphoribosyltransferase (333 aa).

Residues Gly-81, 84–85 (GD), Thr-89, 91–94 (NIST), 109–117 (KHGNRSVSS), and Ala-121 each bind 5-phospho-alpha-D-ribose 1-diphosphate. Gly-81 contributes to the anthranilate binding site. Ser-93 lines the Mg(2+) pocket. Asn-112 lines the anthranilate pocket. Arg-167 contributes to the anthranilate binding site. Mg(2+) contacts are provided by Asp-225 and Glu-226.

It belongs to the anthranilate phosphoribosyltransferase family. In terms of assembly, homodimer. Mg(2+) is required as a cofactor.

The catalysed reaction is N-(5-phospho-beta-D-ribosyl)anthranilate + diphosphate = 5-phospho-alpha-D-ribose 1-diphosphate + anthranilate. It participates in amino-acid biosynthesis; L-tryptophan biosynthesis; L-tryptophan from chorismate: step 2/5. Functionally, catalyzes the transfer of the phosphoribosyl group of 5-phosphorylribose-1-pyrophosphate (PRPP) to anthranilate to yield N-(5'-phosphoribosyl)-anthranilate (PRA). The sequence is that of Anthranilate phosphoribosyltransferase from Pasteurella multocida (strain Pm70).